Consider the following 202-residue polypeptide: LexA repressor (202 aa).

The H-T-H motif DNA-binding region spans 28–48; it reads RAEIAQRLGFRSPNAAEEHLK. Active-site for autocatalytic cleavage activity residues include Ser-119 and Lys-156.

It belongs to the peptidase S24 family. Homodimer.

It carries out the reaction Hydrolysis of Ala-|-Gly bond in repressor LexA.. Functionally, represses a number of genes involved in the response to DNA damage (SOS response), including recA and lexA. Binds to the 16 bp palindromic sequence 5'-CTGTATATATATACAG-3'. In the presence of single-stranded DNA, RecA interacts with LexA causing an autocatalytic cleavage which disrupts the DNA-binding part of LexA, leading to derepression of the SOS regulon and eventually DNA repair. The polypeptide is LexA repressor (Klebsiella pneumoniae subsp. pneumoniae (strain ATCC 700721 / MGH 78578)).